The primary structure comprises 1137 residues: Ribonucleoside-diphosphate reductase large subunit (1137 aa).

The interval 1–32 is disordered; it reads MASRPAASSPVEARAPVGGQEAGGPSAATQGE. Positions 64–84 match the RIP homotypic interaction motif (RHIM) motif; that stretch reads SYRISDNNFVQCGSNCTMIID. 2 disordered regions span residues 124–159 and 173–315; these read GGTP…FTLG and AVFG…YPVP. Over residues 131–141 the composition is skewed to polar residues; sequence AGTSTGTQTAD. Residues 196–206 are compositionally biased toward acidic residues; the sequence is SDSDDSEDTDS. Residues 281-290 show a composition bias toward low complexity; the sequence is AGAGLAADPA. The segment covering 291-304 has biased composition (basic and acidic residues); it reads VARDDAEGLSDPRP. Residues threonine 566, 581 to 582, glycine 612, 791 to 795, and 968 to 972 each bind substrate; these read SC, NLCTE, and PTAAS. Cysteine 582 and cysteine 808 are oxidised to a cystine. Catalysis depends on asparagine 791, which acts as the Proton acceptor. Cysteine 793 functions as the Cysteine radical intermediate in the catalytic mechanism. The active-site Proton acceptor is glutamate 795.

This sequence belongs to the ribonucleoside diphosphate reductase large chain family. As to quaternary structure, heterotetramer composed of a homodimer of the large subunit (R1) and a homodimer of the small subunit (R2). Larger multisubunit protein complex are also active, composed of (R1)n(R2)n. Self-assembles (via RIP homotypic interaction motif/RHIM) into homomeric fibrillar amyloid structures. Interacts (via RHIM) with human RIPK1 (via RHIM). Interacts (via RHIM) with human RIPK3 (via RHIM); the interaction leads to heteromeric amyloid assemblies. Interacts (via RHIM) with human ZBP1 (via RHIM); the interaction leads to heteromeric amyloid assemblies. Interacts (via C-terminus) with host CASP8.

The catalysed reaction is a 2'-deoxyribonucleoside 5'-diphosphate + [thioredoxin]-disulfide + H2O = a ribonucleoside 5'-diphosphate + [thioredoxin]-dithiol. Ribonucleoside-diphosphate reductase holoenzyme that provides the precursors necessary for viral DNA synthesis. Allows virus growth in non-dividing cells, as well as reactivation from latency in infected hosts. Catalyzes the biosynthesis of deoxyribonucleotides from the corresponding ribonucleotides. Prevents host necroptosis by targeting host RIPK1 and RIPK3, thereby hampering the formation of necroptotic RIPK1-RIPK3 complexes. Forms hetero-amyloid structures with host proteins RIPK3 or ZBP1 which may prevent RIPK3- and ZBP1-mediated necroptosis. In addition, inhibits extrinsic apoptosis by targeting host CASP8. The protein is Ribonucleoside-diphosphate reductase large subunit of Human herpesvirus 1 (strain 17) (HHV-1).